Reading from the N-terminus, the 325-residue chain is RepFIB replication protein A (325 aa).

Residues 279 to 298 are disordered; the sequence is APNDESKENPLPPSPAEKVS.

This sequence belongs to the initiator RepB protein family.

This protein is essential for plasmid replication; it is involved in copy control functions. In vitro, binds to the DNA repeat units, BCDD'D'', EFG and HIJ. This Escherichia coli protein is RepFIB replication protein A (repA).